Reading from the N-terminus, the 219-residue chain is Cytidylate kinase (219 aa).

An ATP-binding site is contributed by 15-23 (GPAASGKGT).

It belongs to the cytidylate kinase family. Type 1 subfamily.

The protein resides in the cytoplasm. The enzyme catalyses CMP + ATP = CDP + ADP. It catalyses the reaction dCMP + ATP = dCDP + ADP. The protein is Cytidylate kinase of Brucella abortus (strain S19).